The chain runs to 726 residues: Serine/threonine-protein kinase PKH3 (726 aa).

Residues 10 to 271 form the Protein kinase domain; that stretch reads FLFREELGHG…LEQIKKHKWF (262 aa). ATP contacts are provided by residues 16–24 and K39; that span reads LGHGSYSTV. The active-site Proton acceptor is D136. The disordered stretch occupies residues 629 to 679; that stretch reads QDIPLPSPAKSSSNSGVSEPISKIPPRQLVSASEQSHKAKSEAHTKKANSY. The span at 663 to 673 shows a compositional bias: basic and acidic residues; the sequence is QSHKAKSEAHT.

It belongs to the protein kinase superfamily. Ser/Thr protein kinase family.

The enzyme catalyses L-seryl-[protein] + ATP = O-phospho-L-seryl-[protein] + ADP + H(+). It carries out the reaction L-threonyl-[protein] + ATP = O-phospho-L-threonyl-[protein] + ADP + H(+). Serine/threonine-protein kinase. The sequence is that of Serine/threonine-protein kinase PKH3 (PKH3) from Eremothecium gossypii (strain ATCC 10895 / CBS 109.51 / FGSC 9923 / NRRL Y-1056) (Yeast).